The following is a 254-amino-acid chain: 3-deoxy-manno-octulosonate cytidylyltransferase (254 aa).

The protein belongs to the KdsB family.

The protein resides in the cytoplasm. The catalysed reaction is 3-deoxy-alpha-D-manno-oct-2-ulosonate + CTP = CMP-3-deoxy-beta-D-manno-octulosonate + diphosphate. It participates in nucleotide-sugar biosynthesis; CMP-3-deoxy-D-manno-octulosonate biosynthesis; CMP-3-deoxy-D-manno-octulosonate from 3-deoxy-D-manno-octulosonate and CTP: step 1/1. Its pathway is bacterial outer membrane biogenesis; lipopolysaccharide biosynthesis. Functionally, activates KDO (a required 8-carbon sugar) for incorporation into bacterial lipopolysaccharide in Gram-negative bacteria. This Chlamydia pneumoniae (Chlamydophila pneumoniae) protein is 3-deoxy-manno-octulosonate cytidylyltransferase.